A 281-amino-acid chain; its full sequence is NADPH-dependent 7-cyano-7-deazaguanine reductase (281 aa).

Residue 87–89 coordinates substrate; that stretch reads IES. An NADPH-binding site is contributed by 89-90; it reads SK. The Thioimide intermediate role is filled by Cys188. Asp195 acts as the Proton donor in catalysis. 227 to 228 serves as a coordination point for substrate; it reads HE. 256–257 lines the NADPH pocket; it reads RG. The tract at residues 261-281 is disordered; it reads INPYRSTEQAKPDHNHRMARQ. The span at 268–281 shows a compositional bias: basic and acidic residues; sequence EQAKPDHNHRMARQ.

Belongs to the GTP cyclohydrolase I family. QueF type 2 subfamily. In terms of assembly, homodimer.

The protein resides in the cytoplasm. It catalyses the reaction 7-aminomethyl-7-carbaguanine + 2 NADP(+) = 7-cyano-7-deazaguanine + 2 NADPH + 3 H(+). Its pathway is tRNA modification; tRNA-queuosine biosynthesis. In terms of biological role, catalyzes the NADPH-dependent reduction of 7-cyano-7-deazaguanine (preQ0) to 7-aminomethyl-7-deazaguanine (preQ1). This Vibrio vulnificus (strain YJ016) protein is NADPH-dependent 7-cyano-7-deazaguanine reductase.